A 489-amino-acid chain; its full sequence is Cryptochrome DASH (489 aa).

Residues 6–140 (PTVLVWFRND…EAKGYWGSTL (135 aa)) enclose the Photolyase/cryptochrome alpha/beta domain.

It belongs to the DNA photolyase class-1 family. FAD is required as a cofactor. The cofactor is (6R)-5,10-methylene-5,6,7,8-tetrahydrofolate.

Its function is as follows. May have a photoreceptor function. Binds DNA; represses transcription of at least 8 genes, including slr0364 and slr1866. Does not encode a DNA photolyase function. Its disruption does not affect circadian rhythm. In Synechocystis sp. (strain ATCC 27184 / PCC 6803 / Kazusa), this protein is Cryptochrome DASH (cry).